Here is a 568-residue protein sequence, read N- to C-terminus: Kelch-like protein 12 (568 aa).

The 68-residue stretch at Cys33–Val100 folds into the BTB domain. Residues Cys135–Ile236 enclose the BACK domain. 6 Kelch repeats span residues Val282 to Asp329, Ile331 to Asp379, Met380 to Gly426, Val427 to Asp473, Ile475 to Gly520, and Leu522 to Glu567. The segment at Gln405 to Lys568 is interaction with DVL3.

In terms of assembly, component of the BCR(KLHL12) E3 ubiquitin ligase complex, at least composed of CUL3 and KLHL12 and RBX1. This complex interacts with DVL3 upon activation of the Wnt signaling pathway by WNT3A. Interacts with DRD4, KLHL2 and SEC31A. Interacts with PEF1 and PDCD6/ALG-2; interaction takes place in response to cytosolic calcium increase and leads to bridge together the BCR(KLHL12) complex and SEC31 (SEC31A or SEC31B). Ubiquitinated by the SCF(FBXL17) complex, leading to its degradation by the proteasome: ubiquitination by the SCF(FBXL17) complex takes place when aberrant BTB domain dimers are formed. Ubiquitously expressed. Highly expressed in testis and at lower levels in the submandibular salivary gland.

The protein resides in the cytoplasmic vesicle. It localises to the COPII-coated vesicle. Its pathway is protein modification; protein ubiquitination. In terms of biological role, substrate-specific adapter of a BCR (BTB-CUL3-RBX1) E3 ubiquitin ligase complex that acts as a negative regulator of Wnt signaling pathway and ER-Golgi transport. The BCR(KLHL12) complex is involved in ER-Golgi transport by regulating the size of COPII coats, thereby playing a key role in collagen export, which is required for embryonic stem (ES) cells division: BCR(KLHL12) acts by mediating monoubiquitination of SEC31 (SEC31A or SEC31B). The BCR(KLHL12) complex is also involved in neural crest specification: in response to cytosolic calcium increase, interacts with the heterodimer formed with PEF1 and PDCD6/ALG-2, leading to bridge together the BCR(KLHL12) complex and SEC31 (SEC31A or SEC31B), promoting monoubiquitination of SEC31 and subsequent collagen export. As part of the BCR(KLHL12) complex, also acts as a negative regulator of the Wnt signaling pathway by mediating ubiquitination and subsequent proteolysis of DVL3. The BCR(KLHL12) complex also mediates polyubiquitination of DRD4 and PEF1, without leading to degradation of these proteins. This Homo sapiens (Human) protein is Kelch-like protein 12 (KLHL12).